The primary structure comprises 425 residues: MTGIKKGKNKKKNMKNDDRYKELDSLITNGSEIGNNSGRSCVKRFFKIIGNEMKNNVYVYLLSILYLCVCVMNKVFAKRTLNKMGNYSFVTSETHNIICIIVFQLLYFIYRKTSSSSVYKNESQKNFGWQFFLISLLDASTVIISMIGLTRTTGNIQSFIMQLIIPVNMYFWFMFLGYRYHLFNYLGAFIILITIAVVETFLSFETQGENSIIFNLIMISAFNTLSFSNMTREVVFKKHKINILRLNAMVVLFQFFTSLLVLPVYNIPFLKEIYMPFSEMSTNINNGLRCLFYGENTIVENCGVGMVKMCDNCEGAWKTFITFSFFNICDNLLACYIIDKFSTMTYTIVSCIQGPAITIAYYFKFLAGDAVRKPRILDFLTLFGYLFGTIIYRIGNIILEKKQVIKSQNSNDSEAELTSIETSRA.

Over 1–56 (MTGIKKGKNKKKNMKNDDRYKELDSLITNGSEIGNNSGRSCVKRFFKIIGNEMKNN) the chain is Cytoplasmic. The helical transmembrane segment at 57-77 (VYVYLLSILYLCVCVMNKVFA) threads the bilayer. Over 78–88 (KRTLNKMGNYS) the chain is Vacuolar. Residue Asn-86 is glycosylated (N-linked (GlcNAc...) asparagine). The helical transmembrane segment at 89–109 (FVTSETHNIICIIVFQLLYFI) threads the bilayer. Topologically, residues 110-126 (YRKTSSSSVYKNESQKN) are cytoplasmic. A helical membrane pass occupies residues 127–147 (FGWQFFLISLLDASTVIISMI). The Vacuolar segment spans residues 148–157 (GLTRTTGNIQ). Residues 158–178 (SFIMQLIIPVNMYFWFMFLGY) traverse the membrane as a helical segment. At 179 to 181 (RYH) the chain is on the cytoplasmic side. Residues 182–202 (LFNYLGAFIILITIAVVETFL) traverse the membrane as a helical segment. At 203-210 (SFETQGEN) the chain is on the vacuolar side. A helical transmembrane segment spans residues 211–231 (SIIFNLIMISAFNTLSFSNMT). The Cytoplasmic segment spans residues 232–249 (REVVFKKHKINILRLNAM). The helical transmembrane segment at 250–270 (VVLFQFFTSLLVLPVYNIPFL) threads the bilayer. At 271–318 (KEIYMPFSEMSTNINNGLRCLFYGENTIVENCGVGMVKMCDNCEGAWK) the chain is on the vacuolar side. Intrachain disulfides connect Cys-290/Cys-313 and Cys-302/Cys-310. The chain crosses the membrane as a helical span at residues 319 to 339 (TFITFSFFNICDNLLACYIID). Over 340 to 347 (KFSTMTYT) the chain is Cytoplasmic. Residues 348 to 368 (IVSCIQGPAITIAYYFKFLAG) form a helical membrane-spanning segment. Residues 369-378 (DAVRKPRILD) lie on the Vacuolar side of the membrane. Residues 379–399 (FLTLFGYLFGTIIYRIGNIIL) traverse the membrane as a helical segment. At 400–425 (EKKQVIKSQNSNDSEAELTSIETSRA) the chain is on the cytoplasmic side.

The protein belongs to the CRT-like transporter family.

The protein resides in the vacuole membrane. Its function is as follows. Nutrient transporter. Involved in maintaining the osmotic homeostasis of the digestive vacuole. This chain is Putative chloroquine resistance transporter, found in Plasmodium berghei.